Consider the following 24-residue polypeptide: Outer membrane protein (24 aa).

This sequence belongs to the Gram-negative porin family. Homotrimer.

The protein localises to the cell outer membrane. Functionally, forms pores that allow passive diffusion of small molecules across the outer membrane. The sequence is that of Outer membrane protein from Sodalis glossinidius.